A 179-amino-acid chain; its full sequence is Large ribosomal subunit protein uL6 (179 aa).

The protein belongs to the universal ribosomal protein uL6 family. As to quaternary structure, part of the 50S ribosomal subunit.

Its function is as follows. This protein binds to the 23S rRNA, and is important in its secondary structure. It is located near the subunit interface in the base of the L7/L12 stalk, and near the tRNA binding site of the peptidyltransferase center. The protein is Large ribosomal subunit protein uL6 of Streptomyces griseus subsp. griseus (strain JCM 4626 / CBS 651.72 / NBRC 13350 / KCC S-0626 / ISP 5235).